We begin with the raw amino-acid sequence, 757 residues long: MDVNPTLLFLKVPVQNAISTTFPYTGDPPYSHGTGTGYTMDTVNRTHQYSEKGKWTTNTETGAPQLNPIDGPLPEDNEPSGYAQTDCVLEAMAFLEESHPGIFENSCLETMEIVQQTRVDKLTQGRQTYDWTLNRNQPAATALANTIEIFRSNGLTASESGRLIDFLKDVMESMDKEEMEITTHFQRKRRVRDNMTKKMVTQRTIGKKKQRLNKKSYLIRALTLNTMTKDAERGKLKRRAIATPGMQIRGFVYFVETLARSICEKLEQSGLPVGGNEKKAKLANVVRKMMTNSQDTELSFTITGDNTKWNENQNPRMFLAMITYITRNQPEWFRNVLSIAPIMFSNKMARLGKGYMFESKSMKLRTQIPAEMLANIDLKYFNELTKKKIEKIRPLLIDGTASLSPGMMMGMFNMLSTVLGVSILNLGQKRYTKTTYWWDGLQSSDDFALIVNAPNHEGIQAGVDRFYRTCKLVGINMSKKKSYINRTGTFEFTSFFYRYGFVANFSMELPSFGVSGINESADMSIGVTVIKNNMINNDLGPATAQMALQLFIKDYRYTYRCHRGDTQIQTRRSFELKKLWEQTRSKAGLLVSDGGPNLYNIRNLHIPEVCLKWELMDEDYQGRLCNPLNPFVSHKEIESVNNAVVMPAHGPAKSMEYDAVATTHSWIPKRNRSILNTSQRGILEDEQMYQKCCNLFEKFFPSSSYRRPVGISSMVEAMVSRARIDARIDFESGRIKKEEFAEIMKICSTIEELRRQK.

The segment at Lys-52–Tyr-82 is disordered. A compositionally biased stretch (polar residues) spans Trp-55–Pro-64. 2 short sequence motifs (nuclear localization signal) span residues Arg-187–Met-195 and Arg-203–Ser-216. Residues Arg-249–Glu-256 are promoter-binding site. The RdRp catalytic domain maps to Val-286–Tyr-483.

It belongs to the influenza viruses polymerase PB1 family. As to quaternary structure, influenza RNA polymerase is composed of three subunits: PB1, PB2 and PA. Interacts (via N-terminus) with PA (via C-terminus). Interacts (via C-terminus) with PB2 (via N-terminus); this interaction is essential for transcription initiation. In terms of processing, phosphorylated by host PRKCA.

It is found in the host nucleus. The protein localises to the host cytoplasm. The catalysed reaction is RNA(n) + a ribonucleoside 5'-triphosphate = RNA(n+1) + diphosphate. Its function is as follows. RNA-dependent RNA polymerase which is responsible for replication and transcription of virus RNA segments. The transcription of viral mRNAs occurs by a unique mechanism called cap-snatching. 5' methylated caps of cellular mRNAs are cleaved after 10-13 nucleotides by PA. In turn, these short capped RNAs are used as primers by PB1 for transcription of viral mRNAs. During virus replication, PB1 initiates RNA synthesis and copy vRNA into complementary RNA (cRNA) which in turn serves as a template for the production of more vRNAs. The polypeptide is RNA-directed RNA polymerase catalytic subunit (Aves (Cat)).